The chain runs to 271 residues: MASKDAQNQRRGLPGFLPGAPDPDQSLPASSNPGNQAWQLSLPLPSSFLPTVSLPPGLEYLSQLDLIIIHQQVELLGMILGTETSNKYEIKNSLGQRIYFAVEESICFNRTFCSTLRSCTLRITDNSGREVITVNRPLRCNSCWCPCYLQELEIQAPPGTIVGYVTQKWDPFLPKFTIQNANKEDILKIVGPCVTCGCFGDVDFEVKTINEKLTIGKISKYWSGFVNDVFTNADNFGIHVPADLDVTVKAAMIGACFLFDFMFFEHSLAGL.

Residues 1–10 show a composition bias toward polar residues; that stretch reads MASKDAQNQR. The interval 1–33 is disordered; it reads MASKDAQNQRRGLPGFLPGAPDPDQSLPASSNP. Residues 1 to 45 form a proline-rich domain (PRD) region; it reads MASKDAQNQRRGLPGFLPGAPDPDQSLPASSNPGNQAWQLSLPLP.

It belongs to the phospholipid scramblase family.

This Homo sapiens (Human) protein is Phospholipid scramblase family member 5 (PLSCR5).